A 375-amino-acid polypeptide reads, in one-letter code: Isopentenyl-diphosphate delta-isomerase (375 aa).

Position 8-9 (8-9 (RK)) interacts with substrate. FMN contacts are provided by residues threonine 65, 66–68 (GMT), serine 96, and asparagine 125. Residue 96-98 (SQR) coordinates substrate. Residue glutamine 160 participates in substrate binding. Position 161 (glutamate 161) interacts with Mg(2+). Residues lysine 192, threonine 222, 273–275 (GVR), and 294–295 (AL) each bind FMN.

The protein belongs to the IPP isomerase type 2 family. As to quaternary structure, homooctamer. Dimer of tetramers. Requires FMN as cofactor. NADPH serves as cofactor. It depends on Mg(2+) as a cofactor.

The protein resides in the cytoplasm. It carries out the reaction isopentenyl diphosphate = dimethylallyl diphosphate. Its function is as follows. Involved in the biosynthesis of isoprenoids. Catalyzes the 1,3-allylic rearrangement of the homoallylic substrate isopentenyl (IPP) to its allylic isomer, dimethylallyl diphosphate (DMAPP). This Aeropyrum pernix (strain ATCC 700893 / DSM 11879 / JCM 9820 / NBRC 100138 / K1) protein is Isopentenyl-diphosphate delta-isomerase.